A 444-amino-acid chain; its full sequence is Homogentisate 1,2-dioxygenase (444 aa).

A disordered region spans residues 92-111; that stretch reads GDSADVPPTPPNQLRWDPLP. His-298 acts as the Proton acceptor in catalysis. Fe cation-binding residues include His-341 and Glu-347. Homogentisate contacts are provided by Tyr-356 and His-377. His-377 is a binding site for Fe cation.

It belongs to the homogentisate dioxygenase family. In terms of assembly, hexamer; dimer of trimers. Fe cation is required as a cofactor.

It catalyses the reaction homogentisate + O2 = 4-maleylacetoacetate + H(+). The protein operates within amino-acid degradation; L-phenylalanine degradation; acetoacetate and fumarate from L-phenylalanine: step 4/6. Involved in the catabolism of homogentisate (2,5-dihydroxyphenylacetate or 2,5-OH-PhAc), a central intermediate in the degradation of phenylalanine and tyrosine. Catalyzes the oxidative ring cleavage of the aromatic ring of homogentisate to yield maleylacetoacetate. The sequence is that of Homogentisate 1,2-dioxygenase from Burkholderia vietnamiensis (strain G4 / LMG 22486) (Burkholderia cepacia (strain R1808)).